Consider the following 187-residue polypeptide: UPF0301 protein Cpha266_0885 (187 aa).

This sequence belongs to the UPF0301 (AlgH) family.

The polypeptide is UPF0301 protein Cpha266_0885 (Chlorobium phaeobacteroides (strain DSM 266 / SMG 266 / 2430)).